We begin with the raw amino-acid sequence, 22 residues long: Odorant-binding protein 1 (22 aa).

The protein belongs to the calycin superfamily. Lipocalin family. In terms of assembly, homodimer. The N-terminus is blocked.

Binds the chemical odorant, 2-isobutyl-3-methoxypyrazine. This Oryctolagus cuniculus (Rabbit) protein is Odorant-binding protein 1.